The sequence spans 349 residues: Sperm acrosomal protein FSA-ACR.1 (349 aa).

The N-terminal stretch at 1–8 is a signal peptide; sequence MKEVYLVG. The disordered stretch occupies residues 1 to 265; sequence MKEVYLVGYA…EQPSGIPPSS (265 aa). Basic and acidic residues predominate over residues 63–114; it reads TSGEHTSVEHASAEHSSTEHTSGEHASGEHTSGERATGEHTSSEHATSEHTS. Polar residues-rich tracts occupy residues 117 to 142 and 154 to 171; these read QPSG…SGEQ and SGEQ…TSGE. Basic and acidic residues predominate over residues 178-189; that stretch reads PSGEHAVAEKPS. Low complexity predominate over residues 221-248; it reads EQASIEKASSEQASAEQASAEQASSEQA. The N-linked (GlcNAc...) asparagine glycan is linked to N342.

The protein to acrosomal proteins SP-10. Testis.

It is found in the cytoplasmic vesicle. The protein resides in the secretory vesicle. Its subcellular location is the acrosome. This Vulpes vulpes (Red fox) protein is Sperm acrosomal protein FSA-ACR.1.